Consider the following 146-residue polypeptide: 3-dehydroquinate dehydratase (146 aa).

Y23 functions as the Proton acceptor in the catalytic mechanism. The substrate site is built by N74, H80, and D87. H100 (proton donor) is an active-site residue. Substrate-binding positions include 101-102 (IS) and R111.

This sequence belongs to the type-II 3-dehydroquinase family. As to quaternary structure, homododecamer.

The enzyme catalyses 3-dehydroquinate = 3-dehydroshikimate + H2O. It participates in metabolic intermediate biosynthesis; chorismate biosynthesis; chorismate from D-erythrose 4-phosphate and phosphoenolpyruvate: step 3/7. Catalyzes a trans-dehydration via an enolate intermediate. The sequence is that of 3-dehydroquinate dehydratase from Bacillus cereus (strain ATCC 10987 / NRS 248).